Consider the following 134-residue polypeptide: Replication enhancer protein (134 aa).

Belongs to the geminiviridae replication enhancer protein family. In terms of assembly, homooligomer. Interacts with the replication-associated protein (REP). Interacts with host proliferating cell nuclear antigen (PCNA). Interacts with host retinoblastoma-related protein 1 (RBR1), and may thereby deregulate the host cell cycle. Oligomerization and interaction with PCNA are necessary for optimal replication enhancement.

Functionally, increases viral DNA accumulation. Enhances infectivity and symptom expression. This Mungbean yellow mosaic virus (strain Vigna) (MYMV) protein is Replication enhancer protein.